The sequence spans 232 residues: UPF0173 metal-dependent hydrolase Msil_0741 (232 aa).

Belongs to the UPF0173 family.

This chain is UPF0173 metal-dependent hydrolase Msil_0741, found in Methylocella silvestris (strain DSM 15510 / CIP 108128 / LMG 27833 / NCIMB 13906 / BL2).